Here is a 343-residue protein sequence, read N- to C-terminus: Glyceraldehyde-3-phosphate dehydrogenase (343 aa).

NAD(+) contacts are provided by residues 13–14 (TI) and Gly112. A D-glyceraldehyde 3-phosphate-binding site is contributed by 141 to 143 (SCN). Residue Cys142 is the Nucleophile of the active site. An NAD(+)-binding site is contributed by Arg170. D-glyceraldehyde 3-phosphate is bound at residue 196-197 (HA). Gln303 provides a ligand contact to NAD(+).

The protein belongs to the glyceraldehyde-3-phosphate dehydrogenase family. Homotetramer.

The protein localises to the cytoplasm. The enzyme catalyses D-glyceraldehyde 3-phosphate + phosphate + NADP(+) = (2R)-3-phospho-glyceroyl phosphate + NADPH + H(+). It catalyses the reaction D-glyceraldehyde 3-phosphate + phosphate + NAD(+) = (2R)-3-phospho-glyceroyl phosphate + NADH + H(+). It participates in carbohydrate degradation; glycolysis; pyruvate from D-glyceraldehyde 3-phosphate: step 1/5. The polypeptide is Glyceraldehyde-3-phosphate dehydrogenase (gap) (Aeropyrum pernix (strain ATCC 700893 / DSM 11879 / JCM 9820 / NBRC 100138 / K1)).